Here is a 269-residue protein sequence, read N- to C-terminus: ATP synthase subunit gamma, mitochondrial (269 aa).

As to quaternary structure, F-type ATP synthases have 2 components, the catalytic core F(1) and the membrane-embedded component F(0), linked together by a central stalk and a peripheral stalk. The central stalk, also called rotor shaft, is often seen as part of F(1). The peripheral stalk is seen as part of F(0). F(0) contains the membrane channel next to the rotor. F-type ATP synthases form dimers but each monomer functions independently in ATP generation. The dimer consists of 18 different polypeptides: ATP1 (subunit alpha, part of F(1), 3 molecules per monomer), ATP2 (subunit beta, part of F(1), 3 molecules per monomer), ATP3 (subunit gamma, part of the central stalk), ATP4 (subunit b, part of the peripheral stalk), ATP5/OSCP (subunit 5/OSCP, part of the peripheral stalk), ATP6 (subunit a, part of the peripheral stalk), ATP7 (subunit d, part of the peripheral stalk), ATP8 (subunit 8, part of the peripheral stalk), OLI1 (subunit c, part of the rotor, 10 molecules per monomer), ATP14 (subunit h, part of the peripheral stalk), ATP15 (subunit epsilon, part of the central stalk), ATP16 (subunit delta, part of the central stalk), ATP17 (subunit f, part of the peripheral stalk), ATP18 (subunit i/j, part of the peripheral stalk). Dimer-specific subunits are ATP19 (subunit k, at interface between monomers), ATP20 (subunit g, at interface between monomers), TIM11 (subunit e, at interface between monomers). Also contains subunit L.

The protein localises to the mitochondrion inner membrane. Functionally, mitochondrial membrane ATP synthase (F(1)F(0) ATP synthase or Complex V) produces ATP from ADP in the presence of a proton gradient across the membrane which is generated by electron transport complexes of the respiratory chain. F-type ATP synthases consist of two structural domains, F(1) - containing the extramembraneous catalytic core, and F(0) - containing the membrane proton channel, linked together by a central stalk and a peripheral stalk. During catalysis, ATP synthesis in the catalytic domain of F(1) is coupled via a rotary mechanism of the central stalk subunits to proton translocation. Part of the complex F(1) domain and the central stalk which is part of the complex rotary element. The gamma/ATP3 subunit protrudes into the catalytic domain formed of alpha/ATP1(3)beta/ATP2(3). Rotation of the central stalk against the surrounding alpha/ATP1(3)beta/ATP2(3) subunits leads to hydrolysis of ATP in three separate catalytic sites on the beta/ATP2 subunits. The chain is ATP synthase subunit gamma, mitochondrial from Pichia angusta (Yeast).